The following is an 892-amino-acid chain: Translation initiation factor IF-2 (892 aa).

Positions 138-185 (QRNLAEQQRLAEVDRQRVEEQERKRREEEQAELERQKTESRVVEEILV) are enriched in basic and acidic residues. Disordered stretches follow at residues 138–250 (QRNL…EDDS) and 262–298 (AAER…SGAH). A compositionally biased stretch (low complexity) spans 207–219 (LPRTVRPTPAARP). Residues 391–560 (PRPPVVTIMG…SIQAEVLELK (170 aa)) form the tr-type G domain. Residues 400 to 407 (GHVDHGKT), 446 to 450 (DTPGH), and 500 to 503 (SKID) contribute to the GTP site.

Belongs to the TRAFAC class translation factor GTPase superfamily. Classic translation factor GTPase family. IF-2 subfamily.

Its subcellular location is the cytoplasm. Functionally, one of the essential components for the initiation of protein synthesis. Protects formylmethionyl-tRNA from spontaneous hydrolysis and promotes its binding to the 30S ribosomal subunits. Also involved in the hydrolysis of GTP during the formation of the 70S ribosomal complex. This chain is Translation initiation factor IF-2, found in Xylella fastidiosa (strain Temecula1 / ATCC 700964).